We begin with the raw amino-acid sequence, 1137 residues long: Calcium-activated potassium channel subunit alpha-1 (1137 aa).

The Extracellular segment spans residues 1-44 (MSNNINANNLNTDSSSSPVNVPKMDALIIPVTMEVPCDSRGQRM). A helical membrane pass occupies residues 45 to 65 (WWAFLASSMVTFFGGLFIILL). At 66–137 (WRTLKYLWTV…MISAQTLTGR (72 aa)) the chain is on the cytoplasmic side. The chain crosses the membrane as a helical span at residues 138–158 (VLVVLVFALSIGALVIYFIDS). Over 159–173 (SNPIESCQNFYKDFT) the chain is Extracellular. A helical membrane pass occupies residues 174–194 (LQIDMAFNVFFLLYFGLRFIA). Topologically, residues 195–198 (ANDK) are cytoplasmic. A helical transmembrane segment spans residues 199–219 (LWFWLEVNSVVDFFTVPPVFV). Topologically, residues 220–223 (SVYL) are extracellular. Residues 224–244 (NRSWLGLRFLRALRLIQFSEI) traverse the membrane as a helical; Voltage-sensor segment. At 245–259 (LQFLNILKTSNSIKL) the chain is on the cytoplasmic side. A helical membrane pass occupies residues 260–280 (VNLCSIFISTWLTAAGFIHLV). Residues 281 to 294 (ENSGDPWENFQNNQ) lie on the Extracellular side of the membrane. Residues 295–317 (QLTYWECVYLLMVTMSTVGYGDV) constitute an intramembrane region (pore-forming). The Selectivity for potassium motif lies at 311 to 314 (TVGY). At 318–326 (YAKTTLGRL) the chain is on the extracellular side. Residues 327–347 (FMVFFILGGLAMFASYVPEII) form a helical membrane-spanning segment. The Cytoplasmic segment spans residues 348-1137 (ELIGNRKKYG…KQKYVQEDRL (790 aa)). Residues 366 to 508 (RKHIVVCGHI…WNWKEGDDAI (143 aa)) enclose the RCK N-terminal 1 domain. Mg(2+) contacts are provided by glutamate 398, glutamine 421, and glutamate 423. A segment S7 region spans residues 515–535 (LGFIAQSCLAPGLSTMLANLF). A segment S8 region spans residues 572–592 (LSFPAVCELVFAKLKLLMIAI). The interval 636–640 (CKACH) is heme-binding motif. The segment at 660 to 688 (EQPSTLSPKKKQRNGGMRNSPNSSPKLMR) is disordered. Residues 738 to 758 (VLSGHVVVCIFGDVKSALIGL) are segment S9. Residues 740–884 (SGHVVVCIFG…MDRSSPDNSP (145 aa)) form the RCK N-terminal 2 domain. A Calcium bowl motif is present at residues 904 to 926 (TELVNDSNVQFLDQDDDDDPDTE). 4 residues coordinate Ca(2+): glutamine 913, aspartate 916, aspartate 919, and aspartate 921. The interval 933–953 (FACGTAFAVSVLDSLMSATYF) is segment S10. A compositionally biased stretch (low complexity) spans 1088–1112 (ASLSHSSHSSYSSSKKSSSVHSIPS). The disordered stretch occupies residues 1088–1137 (ASLSHSSHSSYSSSKKSSSVHSIPSTANRPNRTKTRDSREKQKYVQEDRL). The segment covering 1121-1137 (KTRDSREKQKYVQEDRL) has biased composition (basic and acidic residues).

Belongs to the potassium channel family. Calcium-activated (TC 1.A.1.3) subfamily. KCa1.1/KCNMA1 sub-subfamily. As to quaternary structure, homotetramer; which constitutes the calcium-activated potassium channel.

It localises to the cell membrane. It carries out the reaction K(+)(in) = K(+)(out). Its activity is regulated as follows. Ethanol and carbon monoxide-bound heme increase channel activation. Heme inhibits channel activation. Functionally, potassium channel activated by both membrane depolarization or increase in cytosolic Ca(2+) that mediates export of K(+). It is also activated by the concentration of cytosolic Mg(2+). Its activation dampens the excitatory events that elevate the cytosolic Ca(2+) concentration and/or depolarize the cell membrane. It therefore contributes to repolarization of the membrane potential. Plays a key role in controlling excitability in a number of systems, such as regulation of the contraction of smooth muscle, the tuning of hair cells in the cochlea, regulation of transmitter release, and innate immunity. In smooth muscles, its activation by high level of Ca(2+), caused by ryanodine receptors in the sarcoplasmic reticulum, regulates the membrane potential. In cochlea cells, its number and kinetic properties partly determine the characteristic frequency of each hair cell and thereby helps to establish a tonotopic map. Highly sensitive to both iberiotoxin (IbTx) and charybdotoxin (CTX). The chain is Calcium-activated potassium channel subunit alpha-1 (KCNMA1) from Gallus gallus (Chicken).